The primary structure comprises 122 residues: UPF0102 protein VV1_0590 (122 aa).

The protein belongs to the UPF0102 family.

The sequence is that of UPF0102 protein VV1_0590 from Vibrio vulnificus (strain CMCP6).